The chain runs to 50 residues: Large ribosomal subunit protein bL33 (50 aa).

Belongs to the bacterial ribosomal protein bL33 family.

The chain is Large ribosomal subunit protein bL33 from Sulfurovum sp. (strain NBC37-1).